Consider the following 149-residue polypeptide: Probable flagellum biosynthesis repressor protein FlbT (149 aa).

This sequence belongs to the FlbT family.

Has a post-transcriptional repressor function in flagellum biogenesis. Associates with the 5'-UTR of fljK mRNA and promotes its degradation. In Agrobacterium fabrum (strain C58 / ATCC 33970) (Agrobacterium tumefaciens (strain C58)), this protein is Probable flagellum biosynthesis repressor protein FlbT.